A 173-amino-acid chain; its full sequence is Flavodoxin (173 aa).

In terms of domain architecture, Flavodoxin-like spans 2-168 (IGIFFSTSTG…RVAGWVEAVV (167 aa)).

It belongs to the flavodoxin family. FMN serves as cofactor.

Low-potential electron donor to a number of redox enzymes. This is Flavodoxin from Chondrus crispus (Carrageen Irish moss).